A 264-amino-acid chain; its full sequence is Energy-coupling factor transporter ATP-binding protein EcfA1 (264 aa).

In terms of domain architecture, ABC transporter spans 2–234 (IQVENLSFSY…DEFNPFLIKI (233 aa)). 34–41 (GKNGSGKS) contributes to the ATP binding site.

Belongs to the ABC transporter superfamily. Energy-coupling factor EcfA family. As to quaternary structure, forms a stable energy-coupling factor (ECF) transporter complex composed of 2 membrane-embedded substrate-binding proteins (S component), 2 ATP-binding proteins (A component) and 2 transmembrane proteins (T component).

The protein localises to the cell inner membrane. Functionally, ATP-binding (A) component of a common energy-coupling factor (ECF) ABC-transporter complex. Unlike classic ABC transporters this ECF transporter provides the energy necessary to transport a number of different substrates. This is Energy-coupling factor transporter ATP-binding protein EcfA1 from Fusobacterium nucleatum subsp. nucleatum (strain ATCC 25586 / DSM 15643 / BCRC 10681 / CIP 101130 / JCM 8532 / KCTC 2640 / LMG 13131 / VPI 4355).